The following is an 863-amino-acid chain: Valine--tRNA ligase (863 aa).

The 'HIGH' region signature appears at 43 to 53 (PYPTGSFHIGH). The short motif at 517–521 (KMSKS) is the 'KMSKS' region element. ATP is bound at residue K520.

This sequence belongs to the class-I aminoacyl-tRNA synthetase family. ValS type 2 subfamily.

It is found in the cytoplasm. It catalyses the reaction tRNA(Val) + L-valine + ATP = L-valyl-tRNA(Val) + AMP + diphosphate. Functionally, catalyzes the attachment of valine to tRNA(Val). As ValRS can inadvertently accommodate and process structurally similar amino acids such as threonine, to avoid such errors, it has a 'posttransfer' editing activity that hydrolyzes mischarged Thr-tRNA(Val) in a tRNA-dependent manner. The polypeptide is Valine--tRNA ligase (Archaeoglobus fulgidus (strain ATCC 49558 / DSM 4304 / JCM 9628 / NBRC 100126 / VC-16)).